The sequence spans 105 residues: Large ribosomal subunit protein bL21c (105 aa).

Belongs to the bacterial ribosomal protein bL21 family. In terms of assembly, part of the 50S ribosomal subunit.

Its subcellular location is the plastid. It is found in the chloroplast. This protein binds to 23S rRNA. This chain is Large ribosomal subunit protein bL21c, found in Trieres chinensis (Marine centric diatom).